A 353-amino-acid polypeptide reads, in one-letter code: Photosystem II protein D1 (353 aa).

Threonine 2 carries the post-translational modification N-acetylthreonine. Threonine 2 bears the Phosphothreonine mark. The next 3 helical transmembrane spans lie at 29 to 46, 118 to 133, and 142 to 156; these read YIGWFGVLMIPTLLTATS, HFLLGVACYMGREWEL, and WIAVAYSAPVAAATA. Histidine 118 contributes to the chlorophyll a binding site. Tyrosine 126 is a binding site for pheophytin a. [CaMn4O5] cluster-binding residues include aspartate 170 and glutamate 189. The helical transmembrane segment at 197 to 218 threads the bilayer; that stretch reads FHMLGVAGVFGGSLFSAMHGSL. Histidine 198 is a chlorophyll a binding site. A quinone is bound by residues histidine 215 and 264–265; that span reads SF. Histidine 215 serves as a coordination point for Fe cation. Histidine 272 provides a ligand contact to Fe cation. The helical transmembrane segment at 274-288 threads the bilayer; the sequence is FLAAWPVVGIWFTAL. The [CaMn4O5] cluster site is built by histidine 332, glutamate 333, aspartate 342, and alanine 344. A propeptide spanning residues 345–353 is cleaved from the precursor; that stretch reads ALEVPSLNG.

It belongs to the reaction center PufL/M/PsbA/D family. PSII is composed of 1 copy each of membrane proteins PsbA, PsbB, PsbC, PsbD, PsbE, PsbF, PsbH, PsbI, PsbJ, PsbK, PsbL, PsbM, PsbT, PsbX, PsbY, PsbZ, Psb30/Ycf12, at least 3 peripheral proteins of the oxygen-evolving complex and a large number of cofactors. It forms dimeric complexes. The cofactor is The D1/D2 heterodimer binds P680, chlorophylls that are the primary electron donor of PSII, and subsequent electron acceptors. It shares a non-heme iron and each subunit binds pheophytin, quinone, additional chlorophylls, carotenoids and lipids. D1 provides most of the ligands for the Mn4-Ca-O5 cluster of the oxygen-evolving complex (OEC). There is also a Cl(-1) ion associated with D1 and D2, which is required for oxygen evolution. The PSII complex binds additional chlorophylls, carotenoids and specific lipids.. Tyr-161 forms a radical intermediate that is referred to as redox-active TyrZ, YZ or Y-Z. Post-translationally, C-terminally processed by CTPA; processing is essential to allow assembly of the oxygen-evolving complex and thus photosynthetic growth.

It is found in the plastid. The protein localises to the chloroplast thylakoid membrane. It catalyses the reaction 2 a plastoquinone + 4 hnu + 2 H2O = 2 a plastoquinol + O2. Its function is as follows. Photosystem II (PSII) is a light-driven water:plastoquinone oxidoreductase that uses light energy to abstract electrons from H(2)O, generating O(2) and a proton gradient subsequently used for ATP formation. It consists of a core antenna complex that captures photons, and an electron transfer chain that converts photonic excitation into a charge separation. The D1/D2 (PsbA/PsbD) reaction center heterodimer binds P680, the primary electron donor of PSII as well as several subsequent electron acceptors. This Lolium perenne (Perennial ryegrass) protein is Photosystem II protein D1.